Reading from the N-terminus, the 577-residue chain is uncharacterized protein (577 aa).

Composition is skewed to polar residues over residues 1 to 21 and 68 to 87; these read MSSTPTAEELALQNTVSQSAS and SFQNLTPVNSNPSNQNSKTE. Disordered stretches follow at residues 1-24 and 68-93; these read MSSTPTAEELALQNTVSQSASAHP and SFQNLTPVNSNPSNQNSKTEPNPDDV. Transmembrane regions (helical) follow at residues 139 to 159, 174 to 194, 204 to 224, 232 to 252, 262 to 282, 292 to 312, 367 to 387, 402 to 422, 447 to 467, 473 to 493, 504 to 526, and 543 to 563; these read CILAYVALCSSFASSVFAVPA, LLTMTVFLLGYCSGPIIWAPL, ILIGMLGFGIFNISVAVGKDI, FFAGFFASAPLTVVAAALADM, ITLFSAMVFDGPLVSPIVGGF, WTEYITSFMGFFALIIVYLFC, PICFLITLYSSFVYAILYLLL, MGVAELPYIGLLVGVFIGSGI, LPPMMIGCFMFPAGIFWLSWS, VNWVVPALSGLATGCGILLIF, YLFRAASAIAANTIMRSAMAAGF, and GSLLGFIATALIPMPFVFFFF.

The protein belongs to the major facilitator superfamily. CAR1 family.

Its subcellular location is the endoplasmic reticulum. The protein resides in the membrane. This is an uncharacterized protein from Schizosaccharomyces pombe (strain 972 / ATCC 24843) (Fission yeast).